We begin with the raw amino-acid sequence, 172 residues long: Small ribosomal subunit protein uS5 (172 aa).

The region spanning 17 to 80 (LREKMISVNR…EQARRNMFKV (64 aa)) is the S5 DRBM domain.

This sequence belongs to the universal ribosomal protein uS5 family. Part of the 30S ribosomal subunit. Contacts proteins S4 and S8.

In terms of biological role, with S4 and S12 plays an important role in translational accuracy. Its function is as follows. Located at the back of the 30S subunit body where it stabilizes the conformation of the head with respect to the body. The sequence is that of Small ribosomal subunit protein uS5 from Burkholderia orbicola (strain AU 1054).